We begin with the raw amino-acid sequence, 485 residues long: GlcNAc-binding protein A (485 aa).

The signal sequence occupies residues 1 to 29 (MKKQPQKTLLAIALSVVSGTAMSHGYVSA). The Chitin-binding type-4 domain occupies 30–200 (VENGVAEARV…SFYNVIDVKF (171 aa)). One can recognise a Chitin-binding type-3 domain in the interval 437 to 478 (AGTKVLASDGAIYQCKPFPYSGYCVQWTPTATQYQPGTGSHW).

This sequence belongs to the GbpA family.

It localises to the secreted. Its function is as follows. Probably interacts with GlcNAc residues. May promote attachment to both epithelial cell surfaces and chitin. The chain is GlcNAc-binding protein A from Vibrio vulnificus (strain YJ016).